Consider the following 84-residue polypeptide: uncharacterized protein (84 aa).

A helical membrane pass occupies residues Ile25–Phe45.

The protein resides in the membrane. This is an uncharacterized protein from Bacillus anthracis.